The primary structure comprises 276 residues: Rhomboid protease GlpG (276 aa).

The next 6 membrane-spanning stretches (helical) occupy residues glycine 94–leucine 114, alanine 142–glycine 162, leucine 169–glutamine 189, phenylalanine 192–tryptophan 212, leucine 229–methionine 249, and alanine 250–leucine 270. Serine 201 (nucleophile) is an active-site residue. The active site involves histidine 254.

This sequence belongs to the peptidase S54 family.

Its subcellular location is the cell inner membrane. It catalyses the reaction Cleaves type-1 transmembrane domains using a catalytic dyad composed of serine and histidine that are contributed by different transmembrane domains.. Functionally, rhomboid-type serine protease that catalyzes intramembrane proteolysis. This Shigella boydii serotype 4 (strain Sb227) protein is Rhomboid protease GlpG.